Here is a 37-residue protein sequence, read N- to C-terminus: Large ribosomal subunit protein bL36 (37 aa).

The protein belongs to the bacterial ribosomal protein bL36 family.

This chain is Large ribosomal subunit protein bL36, found in Mycobacterium leprae (strain Br4923).